A 245-amino-acid chain; its full sequence is 1-(5-phosphoribosyl)-5-[(5-phosphoribosylamino)methylideneamino] imidazole-4-carboxamide isomerase (245 aa).

Asp-7 acts as the Proton acceptor in catalysis. The Proton donor role is filled by Asp-129.

This sequence belongs to the HisA/HisF family.

It localises to the cytoplasm. The catalysed reaction is 1-(5-phospho-beta-D-ribosyl)-5-[(5-phospho-beta-D-ribosylamino)methylideneamino]imidazole-4-carboxamide = 5-[(5-phospho-1-deoxy-D-ribulos-1-ylimino)methylamino]-1-(5-phospho-beta-D-ribosyl)imidazole-4-carboxamide. The protein operates within amino-acid biosynthesis; L-histidine biosynthesis; L-histidine from 5-phospho-alpha-D-ribose 1-diphosphate: step 4/9. The protein is 1-(5-phosphoribosyl)-5-[(5-phosphoribosylamino)methylideneamino] imidazole-4-carboxamide isomerase of Vibrio vulnificus (strain CMCP6).